The sequence spans 441 residues: Protein eva-1 homolog C (441 aa).

The tract at residues 1 to 23 is disordered; that stretch reads MLLPGRARQPPTPQPVQHPGLRR. The signal sequence occupies residues 1–48; it reads MLLPGRARQPPTPQPVQHPGLRRQVEPPGQLLRLFYCTVLVCSKEISA. Residues 49–322 lie on the Extracellular side of the membrane; sequence LTDFSGYLTK…AYIRAHPERA (274 aa). Residue asparagine 62 is glycosylated (N-linked (GlcNAc...) asparagine). The region spanning 67-159 is the SUEL-type lectin 1 domain; the sequence is ACDGDYLNLQ…KYLLVSFKCQ (93 aa). Asparagine 165 carries an N-linked (GlcNAc...) asparagine glycan. The SUEL-type lectin 2 domain maps to 168 to 260; it reads VCEDQELKLH…KYLTVTYACV (93 aa). The chain crosses the membrane as a helical span at residues 323 to 343; the sequence is ALLFVSSVCIGLALTLCALVI. The Cytoplasmic segment spans residues 344–441; the sequence is RESCAKDFRD…SLPRNMGQFY (98 aa). The disordered stretch occupies residues 362–390; it reads VPGSDKVEEDSEDEEEEEDPSESDFPGEL. Acidic residues predominate over residues 368 to 383; sequence VEEDSEDEEEEEDPSE.

It belongs to the EVA1 family. As to expression, ubiquitous.

It is found in the membrane. Functionally, binds heparin. This is Protein eva-1 homolog C (EVA1C) from Homo sapiens (Human).